A 164-amino-acid polypeptide reads, in one-letter code: MTKVVYPGTFDPITKGHLDILVRAAQVFDQVTLLVLSNLQKKSLFSLEERVRLAKSAIEESNAPSNIIVDSYEGVTVHYLEEHGIRLIIRGLRAVSDYEYEIQLFLANKYLNSQVETVLMPTSLRYQFVSSSLVKEMVSFGLDVSEFVTPTVERALKEKLEVKQ.

A substrate-binding site is contributed by T9. ATP-binding positions include 9-10 (TF) and H17. K41, T76, and R90 together coordinate substrate. Residues 91-93 (GLR), E101, and 126-132 (YQFVSSS) contribute to the ATP site.

It belongs to the bacterial CoaD family. Homohexamer. It depends on Mg(2+) as a cofactor.

Its subcellular location is the cytoplasm. The enzyme catalyses (R)-4'-phosphopantetheine + ATP + H(+) = 3'-dephospho-CoA + diphosphate. It participates in cofactor biosynthesis; coenzyme A biosynthesis; CoA from (R)-pantothenate: step 4/5. In terms of biological role, reversibly transfers an adenylyl group from ATP to 4'-phosphopantetheine, yielding dephospho-CoA (dPCoA) and pyrophosphate. The chain is Phosphopantetheine adenylyltransferase from Coprothermobacter proteolyticus (strain ATCC 35245 / DSM 5265 / OCM 4 / BT).